Reading from the N-terminus, the 270-residue chain is Putative hydro-lyase Noca_0093 (270 aa).

Belongs to the D-glutamate cyclase family.

This Nocardioides sp. (strain ATCC BAA-499 / JS614) protein is Putative hydro-lyase Noca_0093.